We begin with the raw amino-acid sequence, 83 residues long: Putative snRNP Sm-like protein (83 aa).

A Sm domain is found at 9 to 81 (KPMDVLKSAL…VIFVSPSKGD (73 aa)).

Belongs to the snRNP Sm proteins family.

This is Putative snRNP Sm-like protein from Thermoplasma acidophilum (strain ATCC 25905 / DSM 1728 / JCM 9062 / NBRC 15155 / AMRC-C165).